The following is a 185-amino-acid chain: MYIIAGLGNPGKEYEGTRHNVGFMVIDALSKKLGIEVSRLKFKSLMGEGHFKGEKVILLKPQTFMNLSGEALYDAVNFYKIPLENVIVVYDDKDLEVGKIRIRRKGSSGGHNGMNSIIYLLNSEDFPRVRIGIGKPEDGDLVRHVLGRFSDEEKKVIDEAVERAAEAVIDIMENGIEHAMSRFNG.

Residue Tyr14 participates in tRNA binding. His19 (proton acceptor) is an active-site residue. TRNA-binding residues include Phe64, Asn66, and Asn112.

The protein belongs to the PTH family. Monomer.

The protein resides in the cytoplasm. The catalysed reaction is an N-acyl-L-alpha-aminoacyl-tRNA + H2O = an N-acyl-L-amino acid + a tRNA + H(+). In terms of biological role, hydrolyzes ribosome-free peptidyl-tRNAs (with 1 or more amino acids incorporated), which drop off the ribosome during protein synthesis, or as a result of ribosome stalling. Its function is as follows. Catalyzes the release of premature peptidyl moieties from peptidyl-tRNA molecules trapped in stalled 50S ribosomal subunits, and thus maintains levels of free tRNAs and 50S ribosomes. The chain is Peptidyl-tRNA hydrolase from Caldanaerobacter subterraneus subsp. tengcongensis (strain DSM 15242 / JCM 11007 / NBRC 100824 / MB4) (Thermoanaerobacter tengcongensis).